A 131-amino-acid chain; its full sequence is D-ribose pyranase (131 aa).

His20 acts as the Proton donor in catalysis. Substrate contacts are provided by residues Asp28, His98, and 120 to 122 (YAN).

It belongs to the RbsD / FucU family. RbsD subfamily. Homodecamer.

The protein localises to the cytoplasm. It catalyses the reaction beta-D-ribopyranose = beta-D-ribofuranose. It functions in the pathway carbohydrate metabolism; D-ribose degradation; D-ribose 5-phosphate from beta-D-ribopyranose: step 1/2. Functionally, catalyzes the interconversion of beta-pyran and beta-furan forms of D-ribose. This chain is D-ribose pyranase, found in Bacillus cereus (strain AH187).